A 643-amino-acid chain; its full sequence is Tigger transposable element-derived protein 5 (643 aa).

A disordered region spans residues 1-50; it reads MYSAGPPAVPAPRRCRRPPPGRPMQPPRPPAPAPVPAARPPPPAPGPRPR. Pro residues predominate over residues 20 to 48; that stretch reads PGRPMQPPRPPAPAPVPAARPPPPAPGPR. The 52-residue stretch at 52–103 folds into the HTH psq-type domain; that stretch reads AVKMAFRKAYSIKDKLQAIERVKGGERQASVCRDFGVPGGTLRGWLKDEPKL. 2 consecutive DNA-binding regions (H-T-H motif) follow at residues 79–99 and 150–183; these read QASV…WLKD and PLIQ…WQKR. Residues 117–190 enclose the HTH CENPB-type domain; the sequence is QRKKMRLANE…QKRHGISSQR (74 aa). Residues 197–236 form a disordered region; the sequence is PVAAGPAPGPPVKQEPAQPTRAGPLPDRAASTPAPAEGGY. Residues 238–358 enclose the DDE-1 domain; sequence DEQIYNANVT…LQQKAVLLVA (121 aa). Residues 366 to 395 form a disordered region; the sequence is EARMPALEESEETRRRCRPEPTGPPEELQT.

The protein belongs to the tigger transposable element derived protein family.

It is found in the nucleus. In Bos taurus (Bovine), this protein is Tigger transposable element-derived protein 5 (TIGD5).